The following is a 1347-amino-acid chain: Protocadherin-11 X-linked (1347 aa).

Residues 1–23 (MDLLSGTYIFAVLLACVVFHSGA) form the signal peptide. At 24–812 (QEKNYTIREE…VSSPTSDYVK (789 aa)) the chain is on the extracellular side. Cadherin domains follow at residues 26 to 139 (KNYT…APLF), 140 to 249 (PATV…HPVF), 250 to 355 (KETE…VPSI), 362 to 466 (NPVN…APVF), 467 to 570 (TQSF…SPVF), 571 to 673 (THNE…KPVF), and 677 to 795 (PSNY…APVT). N-linked (GlcNAc...) asparagine glycans are attached at residues Asn27, Asn48, and Asn54. Asn344 is a glycosylation site (N-linked (GlcNAc...) asparagine). An N-linked (GlcNAc...) asparagine glycan is attached at Asn553. An N-linked (GlcNAc...) asparagine glycan is attached at Asn773. A helical membrane pass occupies residues 813-833 (ILVAAVAGTITVVVVIFITAV). Topologically, residues 834–1347 (VRCRQAPHLK…DSPVMEEHPL (514 aa)) are cytoplasmic. Disordered stretches follow at residues 1057–1091 (LPEG…GYPQ), 1097–1116 (RATP…ESTF), and 1325–1347 (TFTP…EHPL).

The protein resides in the cell membrane. Its function is as follows. Potential calcium-dependent cell-adhesion protein. In Pan paniscus (Pygmy chimpanzee), this protein is Protocadherin-11 X-linked (PCDH11X).